A 528-amino-acid polypeptide reads, in one-letter code: Extracellular serine/threonine protein CG31145 (528 aa).

Topologically, residues 1-12 (MAVLRTMKLKER) are cytoplasmic. Residues 1–76 (MAVLRTMKLK…LHEFKRKFLQ (76 aa)) constitute a propeptide that is removed on maturation. A helical transmembrane segment spans residues 13–33 (LVISLGATLVLLTLLLIVDVQ). Residues 34 to 528 (MDFGVANRHL…VDGSETDVSS (495 aa)) are Lumenal-facing. Positions 77-130 (KSNASGSKEASTQAGASQSGGATSGQDAAAGASGGAAGPGTSRSTSTRKPTPHD) are disordered. A glycan (N-linked (GlcNAc...) asparagine) is linked at N79. Over residues 86-107 (ASTQAGASQSGGATSGQDAAAG) the composition is skewed to low complexity. N-linked (GlcNAc...) asparagine glycosylation is present at N173. ATP-binding residues include Q220, K236, and E257. E257 serves as a coordination point for Mn(2+). N286 carries N-linked (GlcNAc...) asparagine glycosylation. 2 cysteine pairs are disulfide-bonded: C312-C328 and C317-C321. Position 339 to 342 (339 to 342 (AAFL)) interacts with ATP. 2 disulfides stabilise this stretch: C376–C450 and C451–C510. D408 is an active-site residue. E413 contacts ATP. N-linked (GlcNAc...) asparagine glycosylation is present at N420. D428 contributes to the ATP binding site. D428 contributes to the Mn(2+) binding site.

The protein belongs to the FAM20 family. It depends on Mn(2+) as a cofactor. In terms of tissue distribution, in embryos, prominently expressed in midline glia, salivary gland, intestine and dorsal vessel (heart). Not associated with biomineralization.

It is found in the golgi apparatus membrane. It localises to the secreted. The enzyme catalyses L-seryl-[protein] + ATP = O-phospho-L-seryl-[protein] + ADP + H(+). It carries out the reaction L-threonyl-[protein] + ATP = O-phospho-L-threonyl-[protein] + ADP + H(+). Golgi serine/threonine protein kinase that phosphorylates secretory pathway proteins within Ser-x-Glu/pSer motifs. The chain is Extracellular serine/threonine protein CG31145 from Drosophila melanogaster (Fruit fly).